A 632-amino-acid polypeptide reads, in one-letter code: Arginine--tRNA ligase (632 aa).

The short motif at 129–139 is the 'HIGH' region element; that stretch reads ANPVHPLHVGS.

Belongs to the class-I aminoacyl-tRNA synthetase family.

It localises to the cytoplasm. It carries out the reaction tRNA(Arg) + L-arginine + ATP = L-arginyl-tRNA(Arg) + AMP + diphosphate. This Korarchaeum cryptofilum (strain OPF8) protein is Arginine--tRNA ligase.